Here is a 417-residue protein sequence, read N- to C-terminus: Lissencephaly-1 homolog (417 aa).

A LisH domain is found at 7 to 39 (QKEELNGAILDYFDSSGYKLTSTEFTKETNIEL). Residues 52–80 (TSVIRLQKKVMDLEAKVSQLEEELNNGGR) are a coiled coil. Residues 72 to 93 (EEELNNGGRGPARRGKEDALPR) form a disordered region. WD repeat units follow at residues 102–143 (GHRN…RTLK), 144–185 (GHTN…KTLH), 186–225 (GHDHNVSCVRFLPSGDQLVSSSRDKSIKVWETATGYCTKT), 228–267 (GHEDWVRKVIVSEDGTTLASCSNDQTARVWNLAKGECLLT), 270–339 (EHSH…CLQT), 342–383 (GHDN…KTIN), and 385–417 (AHSHFISCLDFCSHNPHIATGGVDDIIKIWKLG).

Belongs to the WD repeat LIS1/nudF family.

It is found in the cytoplasm. It localises to the cytoskeleton. The protein localises to the microtubule organizing center. The protein resides in the centrosome. In terms of biological role, positively regulates the activity of the minus-end directed microtubule motor protein dynein. May enhance dynein-mediated microtubule sliding by targeting dynein to the microtubule plus end. Required for several dynein- and microtubule-dependent processes. The chain is Lissencephaly-1 homolog from Heterostelium pallidum (strain ATCC 26659 / Pp 5 / PN500) (Cellular slime mold).